The chain runs to 1062 residues: Isoleucine--tRNA ligase (1062 aa).

The 'HIGH' region motif lies at 47 to 57 (PYTTGHIHLGT). The short motif at 591–595 (KMSKS) is the 'KMSKS' region element. Residue K594 coordinates ATP.

Belongs to the class-I aminoacyl-tRNA synthetase family. IleS type 2 subfamily. In terms of assembly, monomer. Zn(2+) serves as cofactor.

Its subcellular location is the cytoplasm. It carries out the reaction tRNA(Ile) + L-isoleucine + ATP = L-isoleucyl-tRNA(Ile) + AMP + diphosphate. Functionally, catalyzes the attachment of isoleucine to tRNA(Ile). As IleRS can inadvertently accommodate and process structurally similar amino acids such as valine, to avoid such errors it has two additional distinct tRNA(Ile)-dependent editing activities. One activity is designated as 'pretransfer' editing and involves the hydrolysis of activated Val-AMP. The other activity is designated 'posttransfer' editing and involves deacylation of mischarged Val-tRNA(Ile). The protein is Isoleucine--tRNA ligase of Methanospirillum hungatei JF-1 (strain ATCC 27890 / DSM 864 / NBRC 100397 / JF-1).